Reading from the N-terminus, the 86-residue chain is Insulin-related peptide 2 (86 aa).

The signal sequence occupies residues 1-19; that stretch reads MKFYIVFALILACAACVSS. A propeptide spanning residues 20-43 is cleaved from the precursor; the sequence is QEGTNFYCGRQLSRTLALVCWGAE. Position 63 is an arginine amide (R63). The propeptide occupies 67-86; the sequence is GPVDECCLKPCSIEEMLTYC.

It belongs to the insulin family. DAGWWVPPQSARALGGGR-amide: Expressed in corpora cardiaca (CC), corpora allata (CA), antennal lobe (AL) and gnathal ganglion (GNG) (at protein level). Expression in CC and CA detected in most animals, in AL in some animals and in GNG in few animals (at protein level).

It localises to the secreted. This is Insulin-related peptide 2 from Agrotis ipsilon (Black cutworm moth).